Here is a 285-residue protein sequence, read N- to C-terminus: 4-diphosphocytidyl-2-C-methyl-D-erythritol kinase (285 aa).

Lysine 12 is a catalytic residue. Residue 95 to 105 participates in ATP binding; the sequence is PMGGGVGGGSS. Residue aspartate 137 is part of the active site.

This sequence belongs to the GHMP kinase family. IspE subfamily.

It catalyses the reaction 4-CDP-2-C-methyl-D-erythritol + ATP = 4-CDP-2-C-methyl-D-erythritol 2-phosphate + ADP + H(+). It participates in isoprenoid biosynthesis; isopentenyl diphosphate biosynthesis via DXP pathway; isopentenyl diphosphate from 1-deoxy-D-xylulose 5-phosphate: step 3/6. Functionally, catalyzes the phosphorylation of the position 2 hydroxy group of 4-diphosphocytidyl-2C-methyl-D-erythritol. The chain is 4-diphosphocytidyl-2-C-methyl-D-erythritol kinase from Actinobacillus pleuropneumoniae serotype 5b (strain L20).